Reading from the N-terminus, the 870-residue chain is MRGILKKISQINFGLMSPEDIRKMSVTQIVTPDTYDEDGYPIENGLMDPRLGVIDPSLRCRTCGAKGGECPGHFGSINLARPVIHVGFADTIHKILRSTCRKCGRVLLTETEIEEYRQRILDAMEKEESLTPIIKEIYAEARRDKCPHCEEEQEEIKLDKPVSIVEGDYKLTPSEVRERLERISDDDALILGVNPEVARPEWMVLTVLPVPPVTVRPSITLETGERSEDDLTHKLVDILRINQRLKENMEAGAPQLIVEDLWELLQYHVTTYFDNEASGVPPARHRSGRPLKTLAQRLKGKEGRFRSNLSGKRVNFSARTVISPDPNISINEVGVPEIIAREVTVPVYVTEWNIDRMREYIENGPDVHPGANYVIRPDGRKIRIYNETKEVVLENLKPGYIVERHLKDGDIVLFNRQPSLHRMSMMAHQVRVLPYKTFRLNLCVCPPYNADFDGDEMNMHVFQTEESRAEAKTLMRVQEHILSPRFGGPIIGGIHDHISGAYLLTRKSAVFSEEKVFQILKKAGLPLPDSRGRDWTGKEIFSMVLPDDLNMVYRAEVCRKCEECLEMECENDAYVVIENGQLISGVIDEKAYGAFAGKILDHIVKEYGTDAAREFLDSATKLAIAGIMHAGFTTSTNDEEIPEEARERIEAHLRNAEARVDQLIEAYENGELEPLPGRSLEETLEMKIMQVLGEARDKSGEIAESYFDMDENHAVIMALTGARGSMLNLTQITACVGQQSVRGGRISRGYDNRTLPHFKKGELGAKSRGFVHSSYKEGLDPIEFFFHAMGGREGLVDTAIRTAQSGYMQRRLVNALQDLTVDENGRVVDNRGVIIQNRFGEDGVDPAKSDYGKIVDLDKLVEEIRLKSKG.

8 residues coordinate Zn(2+): C60, C63, C70, H73, C100, C103, C146, and C149. Mg(2+)-binding residues include D451, D453, and D455.

The protein belongs to the RNA polymerase beta' chain family. As to quaternary structure, part of the RNA polymerase complex. Mg(2+) is required as a cofactor. Zn(2+) serves as cofactor.

It localises to the cytoplasm. It carries out the reaction RNA(n) + a ribonucleoside 5'-triphosphate = RNA(n+1) + diphosphate. Functionally, DNA-dependent RNA polymerase (RNAP) catalyzes the transcription of DNA into RNA using the four ribonucleoside triphosphates as substrates. Forms the clamp head domain. This Methanothermobacter thermautotrophicus (strain ATCC 29096 / DSM 1053 / JCM 10044 / NBRC 100330 / Delta H) (Methanobacterium thermoautotrophicum) protein is DNA-directed RNA polymerase subunit Rpo1N.